Reading from the N-terminus, the 384-residue chain is GTPase Obg (384 aa).

The region spanning 1 to 159 (MKFIDEAKIE…RSLQLELKVL (159 aa)) is the Obg domain. Residues 20–46 (ATSFRREKFVPRGGPDGGDGGKGGSVW) form a disordered region. Over residues 33-43 (GPDGGDGGKGG) the composition is skewed to gly residues. Residues 160–348 (ADVGLLGMPN…LVHQINQYLT (189 aa)) form the OBG-type G domain. GTP-binding positions include 166-173 (GMPNAGKS), 191-195 (FTTLH), 213-216 (DIPG), 284-287 (NKLD), and 329-331 (SAL). Mg(2+) contacts are provided by Ser-173 and Thr-193.

The protein belongs to the TRAFAC class OBG-HflX-like GTPase superfamily. OBG GTPase family. Monomer. Mg(2+) is required as a cofactor.

The protein localises to the cytoplasm. In terms of biological role, an essential GTPase which binds GTP, GDP and possibly (p)ppGpp with moderate affinity, with high nucleotide exchange rates and a fairly low GTP hydrolysis rate. Plays a role in control of the cell cycle, stress response, ribosome biogenesis and in those bacteria that undergo differentiation, in morphogenesis control. This is GTPase Obg from Neisseria meningitidis serogroup C / serotype 2a (strain ATCC 700532 / DSM 15464 / FAM18).